Reading from the N-terminus, the 197-residue chain is 3-isopropylmalate dehydratase small subunit (197 aa).

Belongs to the LeuD family. LeuD type 1 subfamily. As to quaternary structure, heterodimer of LeuC and LeuD.

It catalyses the reaction (2R,3S)-3-isopropylmalate = (2S)-2-isopropylmalate. It functions in the pathway amino-acid biosynthesis; L-leucine biosynthesis; L-leucine from 3-methyl-2-oxobutanoate: step 2/4. Functionally, catalyzes the isomerization between 2-isopropylmalate and 3-isopropylmalate, via the formation of 2-isopropylmaleate. This is 3-isopropylmalate dehydratase small subunit from Azobacteroides pseudotrichonymphae genomovar. CFP2.